We begin with the raw amino-acid sequence, 281 residues long: Ribosomal RNA small subunit methyltransferase A (281 aa).

6 residues coordinate S-adenosyl-L-methionine: N25, L27, G52, E73, D99, and N118.

Belongs to the class I-like SAM-binding methyltransferase superfamily. rRNA adenine N(6)-methyltransferase family. RsmA subfamily.

The protein localises to the cytoplasm. The catalysed reaction is adenosine(1518)/adenosine(1519) in 16S rRNA + 4 S-adenosyl-L-methionine = N(6)-dimethyladenosine(1518)/N(6)-dimethyladenosine(1519) in 16S rRNA + 4 S-adenosyl-L-homocysteine + 4 H(+). Its function is as follows. Specifically dimethylates two adjacent adenosines (A1518 and A1519) in the loop of a conserved hairpin near the 3'-end of 16S rRNA in the 30S particle. May play a critical role in biogenesis of 30S subunits. In Erythrobacter litoralis (strain HTCC2594), this protein is Ribosomal RNA small subunit methyltransferase A.